The primary structure comprises 208 residues: V-type proton ATPase subunit E (208 aa).

The protein belongs to the V-ATPase E subunit family.

Its function is as follows. Produces ATP from ADP in the presence of a proton gradient across the membrane. This is V-type proton ATPase subunit E from Chlamydia trachomatis serovar L2 (strain ATCC VR-902B / DSM 19102 / 434/Bu).